A 738-amino-acid polypeptide reads, in one-letter code: Squalene hopane cyclase afumA (738 aa).

PFTB repeat units follow at residues 132–173 and 321–361; these read GSQY…RIIG and RRRC…KLHD. Residue Asp460 is the Proton donor of the active site. 3 PFTB repeats span residues 482–523, 581–621, and 634–675; these read VRDA…ESLC, CARA…QYFK, and AARA…SQTA.

This sequence belongs to the terpene cyclase/mutase family.

It functions in the pathway secondary metabolite biosynthesis. Functionally, squalene hopane cyclase; part of the gene cluster that mediates the biosynthesis fumihopaside A, a hopane-type glucoside that enhances the thermotolerance and UV resistance of N.fumigata. The first step of fumihopaside A biosynthesis is performed by the squalene hopane cyclase afumA that catalyzes the cyclization of 3S-oxidosqualene into the hopene 21-beta-H-hopane-3-beta,22-diol. The cytochrome P450 monooxygenase afumB is responsible for both hydroxylation at C-24 and oxidations at C-30 of the afumA product. The glycosyltransferase afumC then catalyzes the glycosylation at C-24, using UDP-D-glucose as a donor, to produce fumihopaside A. AfumC is also able to accept UDP-D-galactose and UDP-D-glucuronic acid as donors to yield minor derivatives. Fumihopaside B, another minor derivative produced, is different from fumihopaside A due to the presence of a double bond between C-22 and C-29. In Aspergillus fumigatus (strain CBS 144.89 / FGSC A1163 / CEA10) (Neosartorya fumigata), this protein is Squalene hopane cyclase afumA.